The sequence spans 449 residues: Xylose isomerase (449 aa).

Active-site residues include histidine 103 and aspartate 106. Mg(2+) is bound by residues glutamate 234, glutamate 270, histidine 273, aspartate 298, aspartate 309, aspartate 311, and aspartate 342.

Belongs to the xylose isomerase family. Homotetramer. Mg(2+) serves as cofactor.

It localises to the cytoplasm. The catalysed reaction is alpha-D-xylose = alpha-D-xylulofuranose. This chain is Xylose isomerase, found in Levilactobacillus brevis (strain ATCC 367 / BCRC 12310 / CIP 105137 / JCM 1170 / LMG 11437 / NCIMB 947 / NCTC 947) (Lactobacillus brevis).